The primary structure comprises 342 residues: Holliday junction branch migration complex subunit RuvB (342 aa).

Residues 1 to 179 form a large ATPase domain (RuvB-L) region; the sequence is MTNILSPEKS…FGIPMRLNFY (179 aa). ATP is bound by residues Ile-18, Arg-19, Gly-60, Lys-63, Thr-64, Thr-65, 126 to 128, Arg-169, Tyr-179, and Arg-216; that span reads EDF. Residue Thr-64 coordinates Mg(2+). Positions 180–250 are small ATPAse domain (RuvB-S); it reads NTGELKKVLN…ISDFGLNRLE (71 aa). The head domain (RuvB-H) stretch occupies residues 253–342; it reads RIGLDSNDYR…HQFNIFNENE (90 aa). The DNA site is built by Arg-289, Arg-308, and Arg-313.

Belongs to the RuvB family. As to quaternary structure, homohexamer. Forms an RuvA(8)-RuvB(12)-Holliday junction (HJ) complex. HJ DNA is sandwiched between 2 RuvA tetramers; dsDNA enters through RuvA and exits via RuvB. An RuvB hexamer assembles on each DNA strand where it exits the tetramer. Each RuvB hexamer is contacted by two RuvA subunits (via domain III) on 2 adjacent RuvB subunits; this complex drives branch migration. In the full resolvosome a probable DNA-RuvA(4)-RuvB(12)-RuvC(2) complex forms which resolves the HJ.

The protein resides in the cytoplasm. It carries out the reaction ATP + H2O = ADP + phosphate + H(+). Functionally, the RuvA-RuvB-RuvC complex processes Holliday junction (HJ) DNA during genetic recombination and DNA repair, while the RuvA-RuvB complex plays an important role in the rescue of blocked DNA replication forks via replication fork reversal (RFR). RuvA specifically binds to HJ cruciform DNA, conferring on it an open structure. The RuvB hexamer acts as an ATP-dependent pump, pulling dsDNA into and through the RuvAB complex. RuvB forms 2 homohexamers on either side of HJ DNA bound by 1 or 2 RuvA tetramers; 4 subunits per hexamer contact DNA at a time. Coordinated motions by a converter formed by DNA-disengaged RuvB subunits stimulates ATP hydrolysis and nucleotide exchange. Immobilization of the converter enables RuvB to convert the ATP-contained energy into a lever motion, pulling 2 nucleotides of DNA out of the RuvA tetramer per ATP hydrolyzed, thus driving DNA branch migration. The RuvB motors rotate together with the DNA substrate, which together with the progressing nucleotide cycle form the mechanistic basis for DNA recombination by continuous HJ branch migration. Branch migration allows RuvC to scan DNA until it finds its consensus sequence, where it cleaves and resolves cruciform DNA. The sequence is that of Holliday junction branch migration complex subunit RuvB from Rickettsia conorii (strain ATCC VR-613 / Malish 7).